The sequence spans 218 residues: MSIGILGKKLGMSQFFDEQGKAVPVTLIEAGPCRITQLKSSETDGYQAVQIGFGEIREKLINKPAKGHLAKSGEDLVRHLCEYRVDDLDGIQLGGAVTVGDFAAGQKVDVSGDTMGRGFAGLQKRHGFSRGPMTHGSKNHRQPGSIGAGTTPGRIYPGKRMSGRYGGKKITTRGLTILKIDSERNLLVVKGSVPGKPGSLLNIRPANRVGAKPAKGGK.

The disordered stretch occupies residues 126 to 163 (HGFSRGPMTHGSKNHRQPGSIGAGTTPGRIYPGKRMSG).

It belongs to the universal ribosomal protein uL3 family. In terms of assembly, part of the 50S ribosomal subunit. Forms a cluster with proteins L14 and L19.

Its function is as follows. One of the primary rRNA binding proteins, it binds directly near the 3'-end of the 23S rRNA, where it nucleates assembly of the 50S subunit. The chain is Large ribosomal subunit protein uL3 from Synechococcus sp. (strain CC9311).